The primary structure comprises 633 residues: GTPase-GDP dissociation stimulator BEM4 (633 aa).

In terms of assembly, interacts with CDC42; the interaction is direct. Interacts with RHO1; the interaction is direct. Interacts with RHO2. Interacts with RHO4. Interacts with CDC11.

It is found in the nucleus. The protein resides in the cytoplasm. Functionally, probably acts as a GEF (guanine nucleotide exchange factor) for the Rho family of small GTP-binding proteins (G proteins) that stimulates the dissociation of GDP to enable subsequent binding of GTP. May also chaperone the processing and/or trafficking of small GTPases independently of GEF activity. Involved in the control of polarized cell growth via CDC42-mediated signaling. Involved in the control of cell-wall organization via RHO1-mediated signaling. May also function via RHO2 and RHO4. The protein is GTPase-GDP dissociation stimulator BEM4 of Saccharomyces cerevisiae (strain ATCC 204508 / S288c) (Baker's yeast).